A 283-amino-acid polypeptide reads, in one-letter code: Pantothenate synthetase (283 aa).

ATP is bound at residue 30-37; that stretch reads MGYLHEGH. The active-site Proton donor is His-37. (R)-pantoate is bound at residue Gln-61. A beta-alanine-binding site is contributed by Gln-61. Position 147 to 150 (147 to 150) interacts with ATP; it reads GQKD. Gln-153 is a (R)-pantoate binding site. ATP-binding positions include Val-176 and 184 to 187; that span reads LSSR.

This sequence belongs to the pantothenate synthetase family. As to quaternary structure, homodimer.

It localises to the cytoplasm. The enzyme catalyses (R)-pantoate + beta-alanine + ATP = (R)-pantothenate + AMP + diphosphate + H(+). It functions in the pathway cofactor biosynthesis; (R)-pantothenate biosynthesis; (R)-pantothenate from (R)-pantoate and beta-alanine: step 1/1. Its function is as follows. Catalyzes the condensation of pantoate with beta-alanine in an ATP-dependent reaction via a pantoyl-adenylate intermediate. The polypeptide is Pantothenate synthetase (Moorella thermoacetica (strain ATCC 39073 / JCM 9320)).